The primary structure comprises 306 residues: 4-diphosphocytidyl-2-C-methyl-D-erythritol kinase (306 aa).

Residue Lys11 is part of the active site. 98–108 (PIAGGMGGGSA) is an ATP binding site. Residue Asp140 is part of the active site.

It belongs to the GHMP kinase family. IspE subfamily.

The catalysed reaction is 4-CDP-2-C-methyl-D-erythritol + ATP = 4-CDP-2-C-methyl-D-erythritol 2-phosphate + ADP + H(+). The protein operates within isoprenoid biosynthesis; isopentenyl diphosphate biosynthesis via DXP pathway; isopentenyl diphosphate from 1-deoxy-D-xylulose 5-phosphate: step 3/6. Catalyzes the phosphorylation of the position 2 hydroxy group of 4-diphosphocytidyl-2C-methyl-D-erythritol. This chain is 4-diphosphocytidyl-2-C-methyl-D-erythritol kinase, found in Leifsonia xyli subsp. xyli (strain CTCB07).